We begin with the raw amino-acid sequence, 452 residues long: MPPLEDTIAALATPAGISALAILRASGPDTRRIAEAILGRTPLPRRIQRVDYRDRAGHILDEVLCVFFPQPRSYTGEDLLEISTHGNPFIAQRVLQDLFARGCRPAGPGEFTQRAFLNGRLDLSQAEAVMDLIHAQSDRALAAANHQLRGSLGRHVQRIIDRVVRVLAQVEAYIDFPDEDLPSSNRDTLAAELEMARHEAEQLIATQRYGNLIRDGIKTVIVGAPNVGKSSLLNRLVGRERALVSAEPGTTRDFIEERIAVGEHCIRLVDTAGLNVSPAPLEALGIHKSLEQLADADLVLAIVDLSDPEPSLPPELAKRLDPKNTLLVANKIDLCAGKCVLDTVDQWFGMVFCSAKIGVGLDDLFGAIGRWADQWQITVGQDVIAVNARHSHALALALEALDAALDKLRSGDAAELLASDLRSALLALGDIAGRVDNERVLDELFATFCIGK.

Arg-24, Glu-81, and Arg-120 together coordinate (6S)-5-formyl-5,6,7,8-tetrahydrofolate. A TrmE-type G domain is found at 216-373; sequence GIKTVIVGAP…LFGAIGRWAD (158 aa). GTP contacts are provided by residues 226-231, 245-251, and 270-273; these read NVGKSS, SAEPGTT, and DTAG. Residues Ser-230 and Thr-251 each contribute to the Mg(2+) site. A (6S)-5-formyl-5,6,7,8-tetrahydrofolate-binding site is contributed by Lys-452.

The protein belongs to the TRAFAC class TrmE-Era-EngA-EngB-Septin-like GTPase superfamily. TrmE GTPase family. Homodimer. Heterotetramer of two MnmE and two MnmG subunits. It depends on K(+) as a cofactor.

The protein localises to the cytoplasm. Functionally, exhibits a very high intrinsic GTPase hydrolysis rate. Involved in the addition of a carboxymethylaminomethyl (cmnm) group at the wobble position (U34) of certain tRNAs, forming tRNA-cmnm(5)s(2)U34. This is tRNA modification GTPase MnmE from Opitutus terrae (strain DSM 11246 / JCM 15787 / PB90-1).